Consider the following 116-residue polypeptide: Large ribosomal subunit protein uL24 (116 aa).

It belongs to the universal ribosomal protein uL24 family. In terms of assembly, part of the 50S ribosomal subunit.

Its function is as follows. One of two assembly initiator proteins, it binds directly to the 5'-end of the 23S rRNA, where it nucleates assembly of the 50S subunit. In terms of biological role, one of the proteins that surrounds the polypeptide exit tunnel on the outside of the subunit. This Protochlamydia amoebophila (strain UWE25) protein is Large ribosomal subunit protein uL24.